Reading from the N-terminus, the 213-residue chain is Putative 3-methyladenine DNA glycosylase (213 aa).

Residues 165 to 187 form a disordered region; that stretch reads GTPVPPDQVRNGPRTGVSGDGGV.

It belongs to the DNA glycosylase MPG family.

The protein is Putative 3-methyladenine DNA glycosylase of Streptomyces avermitilis (strain ATCC 31267 / DSM 46492 / JCM 5070 / NBRC 14893 / NCIMB 12804 / NRRL 8165 / MA-4680).